Consider the following 77-residue polypeptide: U8-lycotoxin-Ls1i (77 aa).

The first 20 residues, Met1–Val20, serve as a signal peptide directing secretion. The propeptide occupies Gln21–Arg26.

Belongs to the neurotoxin 19 (CSTX) family. 08 (U8-Lctx) subfamily. Contains 4 disulfide bonds. In terms of tissue distribution, expressed by the venom gland.

Its subcellular location is the secreted. In Lycosa singoriensis (Wolf spider), this protein is U8-lycotoxin-Ls1i.